Consider the following 279-residue polypeptide: Dermonecrotic toxin LspiSicTox-betaIE3i (279 aa).

The active site involves His5. Residues Glu25 and Asp27 each coordinate Mg(2+). The active-site Nucleophile is the His41. Disulfide bonds link Cys45-Cys51 and Cys47-Cys190. Asp85 is a binding site for Mg(2+).

This sequence belongs to the arthropod phospholipase D family. Class II subfamily. It depends on Mg(2+) as a cofactor. As to expression, expressed by the venom gland.

Its subcellular location is the secreted. It carries out the reaction an N-(acyl)-sphingosylphosphocholine = an N-(acyl)-sphingosyl-1,3-cyclic phosphate + choline. The catalysed reaction is an N-(acyl)-sphingosylphosphoethanolamine = an N-(acyl)-sphingosyl-1,3-cyclic phosphate + ethanolamine. The enzyme catalyses a 1-acyl-sn-glycero-3-phosphocholine = a 1-acyl-sn-glycero-2,3-cyclic phosphate + choline. It catalyses the reaction a 1-acyl-sn-glycero-3-phosphoethanolamine = a 1-acyl-sn-glycero-2,3-cyclic phosphate + ethanolamine. In terms of biological role, dermonecrotic toxins cleave the phosphodiester linkage between the phosphate and headgroup of certain phospholipids (sphingolipid and lysolipid substrates), forming an alcohol (often choline) and a cyclic phosphate. This toxin acts on sphingomyelin (SM). It may also act on ceramide phosphoethanolamine (CPE), lysophosphatidylcholine (LPC) and lysophosphatidylethanolamine (LPE), but not on lysophosphatidylserine (LPS), and lysophosphatidylglycerol (LPG). It acts by transphosphatidylation, releasing exclusively cyclic phosphate products as second products. Induces dermonecrosis, hemolysis, increased vascular permeability, edema, inflammatory response, and platelet aggregation. This chain is Dermonecrotic toxin LspiSicTox-betaIE3i, found in Loxosceles spinulosa (Recluse spider).